The primary structure comprises 106 residues: Insulin-like peptide 04 (106 aa).

An N-terminal signal peptide occupies residues 1–22; the sequence is MPRTFLVVLIYILAGFLCSTSA. Residues 23-37 constitute a propeptide that is removed on maturation; the sequence is LRKVNEASGIKTDGS. 3 disulfide bridges follow: Cys45–Cys50, Cys46–Cys80, and Cys59–Cys68. Positions 86-106 are cleaved as a propeptide — c peptide; the sequence is RRKRSLTVDKREAKKFIRQRR.

This sequence belongs to the insulin family.

It is found in the secreted. Its function is as follows. Insulin decreases blood glucose concentration. May have evolved to activate insulin receptors (INSR) in vertebrates. Molecular docking studies reveals unique interaction with the human insulin receptor. In vivo, insulin-like peptide injection reduces blood glucose levels in two models of zebrafish diabetes (streptozotocin- and glucose-induced). Also shorter swimming distance of zebrafish larvae, an effect which is not observed with human insulin. This is Insulin-like peptide 04 from Exaiptasia diaphana (Tropical sea anemone).